We begin with the raw amino-acid sequence, 461 residues long: 23S rRNA (uracil(1939)-C(5))-methyltransferase RlmD (461 aa).

Residues 1–26 (MAKHERGLRFQPTGGSKAPQIPTGKK) form a disordered region. The region spanning 20–78 (QIPTGKKQRLSIERLANDGRGIAFFEGKTWFVLGALAGEEVEARVLGAHGKVVEARTER) is the TRAM domain. Residues cysteine 91, cysteine 97, cysteine 100, and cysteine 179 each coordinate [4Fe-4S] cluster. S-adenosyl-L-methionine contacts are provided by glutamine 283, phenylalanine 312, asparagine 317, glutamate 333, aspartate 360, and aspartate 381. Cysteine 407 functions as the Nucleophile in the catalytic mechanism.

The protein belongs to the class I-like SAM-binding methyltransferase superfamily. RNA M5U methyltransferase family. RlmD subfamily.

The enzyme catalyses uridine(1939) in 23S rRNA + S-adenosyl-L-methionine = 5-methyluridine(1939) in 23S rRNA + S-adenosyl-L-homocysteine + H(+). Its function is as follows. Catalyzes the formation of 5-methyl-uridine at position 1939 (m5U1939) in 23S rRNA. The sequence is that of 23S rRNA (uracil(1939)-C(5))-methyltransferase RlmD from Pseudomonas fluorescens (strain Pf0-1).